The primary structure comprises 595 residues: MKTYPKIGIRPTIDGRQGGVRESLEEKAMKMAQAAKKLIENSLYYADGTPVQCVLASRTIGGSGDAGIVQQEFTGKNIVATLSVTPSWCYGTETMDLDPNTIKAIWGFNGTERPGAVYLAAAMSGYAQKGIPAFKIYGHDVQELDDDTIPVDVQEKILSFARGAIAVGQMKGKSYVNIGASSMGIAGSQVDISFFEDYLGMLVEFVDMTEILRRIHLEIFDPIEYDKALNWIKENCREGIDINEGKDLPDIVKKSKVIPADKDWEFIAKQAIIIRDILYRNEKLGDLGWEEEARGRNAIAGGFQGQRQWTDWLPNGDFTEAIMASTFDWNGPRQVTAFATENDTLNGVSMLLGTLLTNKAPIFSDVRTYWSPESVKRVTGKELTGKAKNGIIHLINSGASALDGTAAAKDKDGNKTMKEFWNMTNEDVQSCLKATDWCRANYEYFRGGGFSSHFKTEAELPVTLIRVNLIKGIGPTLQIAEGYTCVIDEDIHQILDERTDKTWPTTWFAPNLGECGFETVYDVMNHWGANHGAFVHGHIGSDLITLASMLRIPVTLHNVPRERIFRPNIFEGAGTKALETADFEICRLLGPLYKK.

Residues Glu-341 and Asp-365 each act as proton acceptor in the active site. Mn(2+) is bound by residues Glu-341, Asp-365, and His-531.

The protein belongs to the L-fucose isomerase family. Mn(2+) serves as cofactor.

It localises to the cytoplasm. It catalyses the reaction L-fucose = L-fuculose. Its pathway is carbohydrate degradation; L-fucose degradation; L-lactaldehyde and glycerone phosphate from L-fucose: step 1/3. Converts the aldose L-fucose into the corresponding ketose L-fuculose. This Clostridium perfringens (strain 13 / Type A) protein is L-fucose isomerase.